Consider the following 314-residue polypeptide: Probable cell division protein WhiA (314 aa).

The H-T-H motif DNA-binding region spans 282 to 314 (SLKELGELCRPPVSKSGAAHRMRQLMALAESLE).

Belongs to the WhiA family.

In terms of biological role, involved in cell division and chromosome segregation. This chain is Probable cell division protein WhiA, found in Symbiobacterium thermophilum (strain DSM 24528 / JCM 14929 / IAM 14863 / T).